A 206-amino-acid polypeptide reads, in one-letter code: Nucleoside triphosphate pyrophosphatase (206 aa).

The active-site Proton acceptor is D78.

Belongs to the Maf family. The cofactor is a divalent metal cation.

It is found in the cytoplasm. The enzyme catalyses a ribonucleoside 5'-triphosphate + H2O = a ribonucleoside 5'-phosphate + diphosphate + H(+). It catalyses the reaction a 2'-deoxyribonucleoside 5'-triphosphate + H2O = a 2'-deoxyribonucleoside 5'-phosphate + diphosphate + H(+). Its function is as follows. Nucleoside triphosphate pyrophosphatase. May have a dual role in cell division arrest and in preventing the incorporation of modified nucleotides into cellular nucleic acids. In Prochlorococcus marinus (strain MIT 9312), this protein is Nucleoside triphosphate pyrophosphatase.